The chain runs to 376 residues: Deoxyguanosinetriphosphate triphosphohydrolase-like protein (376 aa).

An HD domain is found at 62 to 198 (RLTHSLEVSA…AALADDISYI (137 aa)).

This sequence belongs to the dGTPase family. Type 2 subfamily.

This Rickettsia canadensis (strain McKiel) protein is Deoxyguanosinetriphosphate triphosphohydrolase-like protein.